Reading from the N-terminus, the 525-residue chain is Delta(24)-sterol reductase homolog dhcr-24 (525 aa).

2 helical membrane passes run 27–47 (WVFVVPFLLPLSFLFNTVFDF) and 214–234 (SLFFAIPWSQGTICFLVAATI). The region spanning 47–239 (FRNRIVHAVN…VAATIKIIPC (193 aa)) is the FAD-binding PCMH-type domain.

Belongs to the FAD-binding oxidoreductase/transferase type 4 family. The cofactor is FAD.

Its subcellular location is the endoplasmic reticulum membrane. It localises to the golgi apparatus membrane. It catalyses the reaction cholesterol + NADP(+) = desmosterol + NADPH + H(+). The enzyme catalyses lanosterol + NADPH + H(+) = 24,25-dihydrolanosterol + NADP(+). The catalysed reaction is 5alpha-cholest-8-en-3beta-ol + NADP(+) = zymosterol + NADPH + H(+). Its pathway is steroid biosynthesis; cholesterol biosynthesis. Catalyzes the reduction of the delta-24 double bond of sterol intermediates during cholesterol biosynthesis. The sequence is that of Delta(24)-sterol reductase homolog dhcr-24 from Caenorhabditis elegans.